A 465-amino-acid chain; its full sequence is MTTIPRKGSSHLPGSLHTCKLKLQEDRRQQEKSVIAQPIFVFEKGEQTFKRPAEDTLYEAAEPECNGFPTKRVRSSSFTFHITDSQSQGVRKNNVFMTSALVQSSVDIKSAEQGPVKHSKHVIRPAILQLPQARSCAKVRKTFGHKALESCKTKEKTNNKISEGNSYLLSENLSRARISVQLSTNQDFLGATSVGCQPNEDKCSFKSCSSNFVFGENMVERVLGTQKLTQPQLENDSYAKEKPFKSIPKFPVNFLSSRTDSIKNTSLIESAAAFSSQPSRKCLLEKIDVITGEETEHNVLKINCKLFIFNKTTQSWIERGRGTLRLNDTASTDCGTLQSRLIMRNQGSLRLILNSKLWAQMKIQRANHKNVRITATDLEDYSIKIFLIQASAQDTAYLYAAIHHRLVALQSFNKQRDVNQAESLSETAQQLNCESCDENEDDFIQVTKNGSDPSSWTHRQSVACS.

The region spanning 276-417 (SQPSRKCLLE…ALQSFNKQRD (142 aa)) is the RanBD1 domain.

Interacts with SMAD1, SMAD5 and SMAD8; the interaction (with SMAD at least) increases when SMAD1 is not phosphorylated and mediates SMAD1 nuclear export.

It is found in the nucleus. The protein resides in the cytoplasm. In terms of biological role, nuclear export factor for BMP-specific SMAD1/5/8 that plays a critical role in terminating BMP signaling and regulating mesenchymal stem cell differentiation by blocking osteoblast differentiation to promote myogenic differention. Directly recognizes dephosphorylated SMAD1/5/8 and mediates their nuclear export in a Ran-dependent manner. The chain is Ran-binding protein 3-like (RANBP3L) from Homo sapiens (Human).